We begin with the raw amino-acid sequence, 636 residues long: Threonine--tRNA ligase (636 aa).

A TGS domain is found at 1-63 (MINITTSFPN…SKDGSVDPVT (63 aa)). Residues 244–535 (DHRKIAKDLG…LIEHYAGNIP (292 aa)) are catalytic. Zn(2+) is bound by residues cysteine 335, histidine 386, and histidine 512.

Belongs to the class-II aminoacyl-tRNA synthetase family. Homodimer. Zn(2+) serves as cofactor.

Its subcellular location is the cytoplasm. It catalyses the reaction tRNA(Thr) + L-threonine + ATP = L-threonyl-tRNA(Thr) + AMP + diphosphate + H(+). Functionally, catalyzes the attachment of threonine to tRNA(Thr) in a two-step reaction: L-threonine is first activated by ATP to form Thr-AMP and then transferred to the acceptor end of tRNA(Thr). Also edits incorrectly charged L-seryl-tRNA(Thr). This chain is Threonine--tRNA ligase, found in Anaplasma marginale (strain Florida).